Here is a 73-residue protein sequence, read N- to C-terminus: MILDKTLFSSLTFSLTVLFLLLLIPNLKGFGKLSAIIGGFIALIFQYFGYPSLGILFAGILSPIIILKIKSVK.

Transmembrane regions (helical) follow at residues 7–27 (LFSSLTFSLTVLFLLLLIPNL) and 47–67 (YFGYPSLGILFAGILSPIIIL).

The protein resides in the cell membrane. This is an uncharacterized protein from Methanocaldococcus jannaschii (strain ATCC 43067 / DSM 2661 / JAL-1 / JCM 10045 / NBRC 100440) (Methanococcus jannaschii).